The following is a 256-amino-acid chain: Enolase-phosphatase E1 (256 aa).

Residues D14 and E16 each coordinate Mg(2+). Substrate contacts are provided by residues 142–143 and K176; that span reads SS. D201 is a Mg(2+) binding site.

It belongs to the HAD-like hydrolase superfamily. MasA/MtnC family. As to quaternary structure, monomer. The cofactor is Mg(2+).

Its subcellular location is the cytoplasm. The protein localises to the nucleus. It catalyses the reaction 5-methylsulfanyl-2,3-dioxopentyl phosphate + H2O = 1,2-dihydroxy-5-(methylsulfanyl)pent-1-en-3-one + phosphate. It participates in amino-acid biosynthesis; L-methionine biosynthesis via salvage pathway; L-methionine from S-methyl-5-thio-alpha-D-ribose 1-phosphate: step 3/6. The protein operates within amino-acid biosynthesis; L-methionine biosynthesis via salvage pathway; L-methionine from S-methyl-5-thio-alpha-D-ribose 1-phosphate: step 4/6. In terms of biological role, bifunctional enzyme that catalyzes the enolization of 2,3-diketo-5-methylthiopentyl-1-phosphate (DK-MTP-1-P) into the intermediate 2-hydroxy-3-keto-5-methylthiopentenyl-1-phosphate (HK-MTPenyl-1-P), which is then dephosphorylated to form the acireductone 1,2-dihydroxy-3-keto-5-methylthiopentene (DHK-MTPene). The polypeptide is Enolase-phosphatase E1 (Drosophila erecta (Fruit fly)).